Reading from the N-terminus, the 62-residue chain is MQGTWLPPSFLAVCDTEEVSLFLELCFKIHVTCKAVLICDYGPMELGQSLWEAEGKDPGHFR.

This is an uncharacterized protein from Homo sapiens (Human).